A 500-amino-acid chain; its full sequence is Squalene epoxidase ERG1 (500 aa).

A helical membrane pass occupies residues 20–40; the sequence is EADVVVVGAGVFGCTMAFALA. Residues 30–31, 50–51, Arg-58, Arg-145, Asp-332, and Met-345 each bind FAD; these read VF and ER. 2 consecutive transmembrane segments (helical) span residues 450–470 and 474–494; these read AFLAIWLNACSVVGCGILGIF and LAIIDAVLILWKACIVFIPIM.

It belongs to the squalene monooxygenase family. FAD is required as a cofactor.

It localises to the microsome membrane. Its subcellular location is the endoplasmic reticulum membrane. The protein resides in the lipid droplet. The catalysed reaction is squalene + reduced [NADPH--hemoprotein reductase] + O2 = (S)-2,3-epoxysqualene + oxidized [NADPH--hemoprotein reductase] + H2O + H(+). It participates in terpene metabolism; lanosterol biosynthesis; lanosterol from farnesyl diphosphate: step 2/3. Its pathway is steroid metabolism; ergosterol biosynthesis. Functionally, squalene epoxidase; part of the third module of ergosterol biosynthesis pathway that includes the late steps of the pathway. ERG1 catalyzes the epoxidation of squalene into 2,3-epoxysqualene. The third module or late pathway involves the ergosterol synthesis itself through consecutive reactions that mainly occur in the endoplasmic reticulum (ER) membrane. Firstly, the squalene synthase ERG9 catalyzes the condensation of 2 farnesyl pyrophosphate moieties to form squalene, which is the precursor of all steroids. Squalene synthase is crucial for balancing the incorporation of farnesyl diphosphate (FPP) into sterol and nonsterol isoprene synthesis. Secondly, squalene is converted into lanosterol by the consecutive action of the squalene epoxidase ERG1 and the lanosterol synthase ERG7. Then, the delta(24)-sterol C-methyltransferase ERG6 methylates lanosterol at C-24 to produce eburicol. Eburicol is the substrate of the sterol 14-alpha demethylase encoded by CYP51A, CYP51B and CYP51C, to yield 4,4,24-trimethyl ergosta-8,14,24(28)-trienol. CYP51B encodes the enzyme primarily responsible for sterol 14-alpha-demethylation, and plays an essential role in ascospore formation. CYP51A encodes an additional sterol 14-alpha-demethylase, induced on ergosterol depletion and responsible for the intrinsic variation in azole sensitivity. The third CYP51 isoform, CYP51C, does not encode a sterol 14-alpha-demethylase, but is required for full virulence on host wheat ears. The C-14 reductase ERG24 then reduces the C14=C15 double bond which leads to 4,4-dimethylfecosterol. A sequence of further demethylations at C-4, involving the C-4 demethylation complex containing the C-4 methylsterol oxidases ERG25, the sterol-4-alpha-carboxylate 3-dehydrogenase ERG26 and the 3-keto-steroid reductase ERG27, leads to the production of fecosterol via 4-methylfecosterol. ERG28 has a role as a scaffold to help anchor ERG25, ERG26 and ERG27 to the endoplasmic reticulum. The C-8 sterol isomerase ERG2 then catalyzes the reaction which results in unsaturation at C-7 in the B ring of sterols and thus converts fecosterol to episterol. The sterol-C5-desaturases ERG3A and ERG3BB then catalyze the introduction of a C-5 double bond in the B ring to produce 5-dehydroepisterol. The C-22 sterol desaturases ERG5A and ERG5B further convert 5-dehydroepisterol into ergosta-5,7,22,24(28)-tetraen-3beta-ol by forming the C-22(23) double bond in the sterol side chain. Finally, ergosta-5,7,22,24(28)-tetraen-3beta-ol is substrate of the C-24(28) sterol reductase ERG4 to produce ergosterol. The chain is Squalene epoxidase ERG1 from Gibberella zeae (strain ATCC MYA-4620 / CBS 123657 / FGSC 9075 / NRRL 31084 / PH-1) (Wheat head blight fungus).